Reading from the N-terminus, the 1159-residue chain is Caspase recruitment domain-containing protein 11 (1159 aa).

Residues 18–110 (EEEALWDNVE…ELYKLVTGKE (93 aa)) form the CARD domain. The segment at 111 to 128 (PTRRFSTIVVEEGHEGLT) is linker. Positions 176–449 (FQERYYKMKE…KDNGSLDQSL (274 aa)) form a coiled coil. Residues 441-496 (DNGSLDQSLPRHLPATIISQNLGDTSPRTNGQEADDSSTSEESPEDSKYFLPYHPP) form a disordered region. Residues serine 448 and serine 466 each carry the phosphoserine modification. Residues 450-671 (PRHLPATIIS…GHVRGTGPLV (222 aa)) form an inhibitory domain (ID) region. The segment covering 457 to 472 (IISQNLGDTSPRTNGQ) has biased composition (polar residues). Acidic residues predominate over residues 473–484 (EADDSSTSEESP). Phosphoserine is present on residues serine 512 and serine 540. Positions 532–578 (HEEDFTDGSPSSSRSLPVTSSFSKMQPHRSRSSIMSITAEPPGNDSI) are disordered. Residues 540 to 554 (SPSSSRSLPVTSSFS) are compositionally biased toward low complexity. A Phosphoserine; by PKC/PRKCB and PKC/PRKCQ modification is found at serine 564. Position 598 is a phosphoserine (serine 598). Residues 610-631 (NHERYSFGPPSIHSSSSSHQSE) are disordered. The segment covering 620–630 (SIHSSSSSHQS) has biased composition (low complexity). A phosphoserine; by PKC/PRKCB and PKC/PRKCQ mark is found at serine 649 and serine 657. Positions 672–760 (QHTTLNGDGL…LITLHYKVNH (89 aa)) constitute a PDZ domain. Phosphoserine is present on residues serine 891 and serine 930. The Guanylate kinase-like domain occupies 978 to 1145 (RRRPVLFTPT…LLRVLKDKIV (168 aa)).

In terms of assembly, homodimer; disulfide-linked. Homomultimer; polymerizes following activation, forming a nucleating helical template that seeds BCL10-filament formation via a CARD-CARD interaction. Interacts (via CARD domain) with BCL10 (via CARD domain); interaction takes place following CARD11 activation and polymerization, leading to the formation of a filamentous CBM complex assembly. Component of a CBM complex (CARD11-BCL10-MALT1) complex involved in NF-kappa-B activation. Found in a membrane raft complex, at least composed of BCL10, CARD11, DPP4 and IKBKB. Interacts (via PDZ domain) with DPP4 (via cytoplasmic tail). In terms of processing, phosphorylation at Ser-564, Ser-649 and Ser-657 by PRKCB and PRKCQ leads to a shift from an inactive to an active form that activates the NF-kappa-B signaling.

It localises to the cytoplasm. The protein localises to the membrane raft. With respect to regulation, maintained in an autoinhibited state via homodimerization in which the CARD domain forms an extensive interaction with the adjacent linker and coiled-coil regions. Activation downstream of T-cell receptor (TCR) by phosphorylation by PRKCB and PRKCQ triggers CARD11 homooligomerization and BCL10 recruitment, followed by activation of NF-kappa-B. Its function is as follows. Adapter protein that plays a key role in adaptive immune response by transducing the activation of NF-kappa-B downstream of T-cell receptor (TCR) and B-cell receptor (BCR) engagement. Transduces signals downstream TCR or BCR activation via the formation of a multiprotein complex together with BCL10 and MALT1 that induces NF-kappa-B and MAP kinase p38 (MAPK11, MAPK12, MAPK13 and/or MAPK14) pathways. Upon activation in response to TCR or BCR triggering, CARD11 homooligomerizes to form a nucleating helical template that recruits BCL10 via CARD-CARD interaction, thereby promoting polymerization of BCL10 and subsequent recruitment of MALT1: this leads to I-kappa-B kinase (IKK) phosphorylation and degradation, and release of NF-kappa-B proteins for nuclear translocation. Its binding to DPP4 induces T-cell proliferation and NF-kappa-B activation in a T-cell receptor/CD3-dependent manner. Promotes linear ubiquitination of BCL10 by promoting the targeting of BCL10 to RNF31/HOIP. Stimulates the phosphorylation of BCL10. Also activates the TORC1 signaling pathway. The protein is Caspase recruitment domain-containing protein 11 of Mus musculus (Mouse).